Here is a 426-residue protein sequence, read N- to C-terminus: Transcriptional enhancer factor TEF-1 (426 aa).

Met1 bears the N-acetylmethionine mark. Over residues 1-12 (MEPSSWSGSESP) the composition is skewed to polar residues. The segment at 1–31 (MEPSSWSGSESPAENMERMSDSADKPIDNDA) is disordered. Ser11 bears the Phosphoserine mark. The segment covering 15–28 (NMERMSDSADKPID) has biased composition (basic and acidic residues). Residues 28-104 (DNDAEGVWSP…QVLARRKSRD (77 aa)) constitute a DNA-binding region (TEA). Lys108 bears the N6-lactoyllysine mark. The transcriptional activation stretch occupies residues 167–426 (GSSQDVKPFV…QHHIYRLVKD (260 aa)).

In terms of assembly, interacts with YAP1 and WWTR1/TAZ. Lactylation by AARS1 promotes nuclear localization and stabilization of YAP1, leading to increased Hippo signaling pathway. Delactylated by SIRT1. In developing skeletal muscle and myocardium, in mitotic neuroblasts both in the brain and spinal cord. At later stages of embryogenesis expressed in several developing structures such as the olfactory system, the intestine, and the kidney.

The protein localises to the nucleus. In terms of biological role, transcription factor which plays a key role in the Hippo signaling pathway, a pathway involved in organ size control and tumor suppression by restricting proliferation and promoting apoptosis. The core of this pathway is composed of a kinase cascade wherein MST1/MST2, in complex with its regulatory protein SAV1, phosphorylates and activates LATS1/2 in complex with its regulatory protein MOB1, which in turn phosphorylates and inactivates YAP1 oncoprotein and WWTR1/TAZ. Acts by mediating gene expression of YAP1 and WWTR1/TAZ, thereby regulating cell proliferation, migration and epithelial mesenchymal transition (EMT) induction. Binds specifically and cooperatively to the SPH and GT-IIC 'enhansons' (5'-GTGGAATGT-3') and activates transcription in vivo in a cell-specific manner. The activation function appears to be mediated by a limiting cell-specific transcriptional intermediary factor (TIF). Involved in cardiac development. Binds to the M-CAT motif. In Mus musculus (Mouse), this protein is Transcriptional enhancer factor TEF-1 (Tead1).